The following is a 709-amino-acid chain: ATP-dependent zinc metalloprotease FtsH (709 aa).

Residues 1–25 (MKKNKGLNEATTSEKPQFPKRTAWK) lie on the Cytoplasmic side of the membrane. A helical transmembrane segment spans residues 26 to 46 (IFWWVVILAIIIGILVYILMP). Residues 47–171 (RATTAVIEKW…FVAPDTRARD (125 aa)) are Extracellular-facing. A helical membrane pass occupies residues 172-192 (VLNIFFGLLPIIIFVIFFLLF). The Cytoplasmic segment spans residues 193-709 (WRSARGISGG…DTEKDSETNS (517 aa)). Position 268 to 275 (268 to 275 (GPPGTGKT)) interacts with ATP. His490 is a binding site for Zn(2+). The active site involves Glu491. Zn(2+)-binding residues include His494 and Asp569. Residues 673 to 709 (ILAQKQEQQAKQKAEAKEAKLNKKTEKDTEKDSETNS) are disordered. Residues 680–709 (QQAKQKAEAKEAKLNKKTEKDTEKDSETNS) are compositionally biased toward basic and acidic residues.

The protein in the central section; belongs to the AAA ATPase family. It in the C-terminal section; belongs to the peptidase M41 family. As to quaternary structure, homohexamer. It depends on Zn(2+) as a cofactor.

The protein localises to the cell membrane. Functionally, acts as a processive, ATP-dependent zinc metallopeptidase for both cytoplasmic and membrane proteins. Plays a role in the quality control of integral membrane proteins. This Mycoplasma pneumoniae (strain ATCC 29342 / M129 / Subtype 1) (Mycoplasmoides pneumoniae) protein is ATP-dependent zinc metalloprotease FtsH.